A 399-amino-acid polypeptide reads, in one-letter code: Acetate kinase (399 aa).

A Mg(2+)-binding site is contributed by N9. K16 provides a ligand contact to ATP. R90 is a substrate binding site. D147 acts as the Proton donor/acceptor in catalysis. ATP-binding positions include H207–G211, D282–R284, and G330–N334. E384 lines the Mg(2+) pocket.

This sequence belongs to the acetokinase family. As to quaternary structure, homodimer. Mg(2+) is required as a cofactor. The cofactor is Mn(2+).

Its subcellular location is the cytoplasm. It catalyses the reaction acetate + ATP = acetyl phosphate + ADP. It participates in metabolic intermediate biosynthesis; acetyl-CoA biosynthesis; acetyl-CoA from acetate: step 1/2. Catalyzes the formation of acetyl phosphate from acetate and ATP. Can also catalyze the reverse reaction. This is Acetate kinase from Staphylococcus saprophyticus subsp. saprophyticus (strain ATCC 15305 / DSM 20229 / NCIMB 8711 / NCTC 7292 / S-41).